The primary structure comprises 224 residues: Dehydration-responsive element-binding protein 1G (224 aa).

Polar residues predominate over residues 1–16; sequence MDVSAALSSDYSSGTP. Positions 1–46 are disordered; that stretch reads MDVSAALSSDYSSGTPSPVAADADDGSSAYMTVSSAPPKRRAGRTK. Residues 54-111 constitute a DNA-binding region (AP2/ERF); the sequence is VFKGVRRRNPGRWVCEVREPHGKQRIWLGTFETAEMAARAHDVAALALRGRAACLNFA.

This sequence belongs to the AP2/ERF transcription factor family. ERF subfamily.

It is found in the nucleus. Functionally, transcriptional activator that binds specifically to the DNA sequence 5'-[AG]CCGAC-3'. Binding to the C-repeat/DRE element mediates high salinity- and dehydration-inducible transcription. In Oryza sativa subsp. indica (Rice), this protein is Dehydration-responsive element-binding protein 1G (DREB1G).